Here is a 327-residue protein sequence, read N- to C-terminus: MANNASLEQDPNHCSAINNSIPLIQGKLPTLTVSGKIRVTVTFFLFLLSTAFNASFLLKLQKWTQKRKKGKKLSRMKVLLKHLTLANLLETLIVMPLDGMWNITVQWYAGEFLCKVLSYLKLFSMYAPAFMMVVISLDRSLAITQPLAVQSNSKLEQSMISLAWILSIVFAGPQLYIFRMIYLADGSGPTVFSQCVTHCSFPQWWHQAFYNFFTFGCLFIIPLLIMLICNAKIIFALTRVLHQDPRKLQLNQSKNNIPRARLRTLKMTVAFATSFVVCWTPYYVLGIWYWFDPEMLNRVSEPVNHFFFLFAFLNPCFDPLIYGYFSL.

Residues 1–38 (MANNASLEQDPNHCSAINNSIPLIQGKLPTLTVSGKIR) are Extracellular-facing. N-linked (GlcNAc...) asparagine glycosylation is found at N4 and N18. Residues 39–58 (VTVTFFLFLLSTAFNASFLL) traverse the membrane as a helical segment. The Cytoplasmic segment spans residues 59 to 77 (KLQKWTQKRKKGKKLSRMK). The helical transmembrane segment at 78–97 (VLLKHLTLANLLETLIVMPL) threads the bilayer. Over 98–115 (DGMWNITVQWYAGEFLCK) the chain is Extracellular. Residue N102 is glycosylated (N-linked (GlcNAc...) asparagine). Cysteines 114 and 195 form a disulfide. Residues 116-137 (VLSYLKLFSMYAPAFMMVVISL) form a helical membrane-spanning segment. Residues 138-164 (DRSLAITQPLAVQSNSKLEQSMISLAW) are Cytoplasmic-facing. A helical membrane pass occupies residues 165 to 184 (ILSIVFAGPQLYIFRMIYLA). Topologically, residues 185–211 (DGSGPTVFSQCVTHCSFPQWWHQAFYN) are extracellular. The chain crosses the membrane as a helical span at residues 212-231 (FFTFGCLFIIPLLIMLICNA). The Cytoplasmic segment spans residues 232–280 (KIIFALTRVLHQDPRKLQLNQSKNNIPRARLRTLKMTVAFATSFVVCWT). The helical transmembrane segment at 281-299 (PYYVLGIWYWFDPEMLNRV) threads the bilayer. Over 300-305 (SEPVNH) the chain is Extracellular. Residues 306–325 (FFFLFAFLNPCFDPLIYGYF) form a helical membrane-spanning segment. Residues 326 to 327 (SL) are Cytoplasmic-facing.

The protein belongs to the G-protein coupled receptor 1 family. In terms of tissue distribution, pituitary gland.

The protein localises to the cell membrane. Receptor for gonadotropin releasing hormone (GnRH) that mediates the action of GnRH to stimulate the secretion of the gonadotropic hormones luteinizing hormone (LH) and follicle-stimulating hormone (FSH). This receptor mediates its action by association with G-proteins that activate a phosphatidylinositol-calcium second messenger system. The sequence is that of Gonadotropin-releasing hormone receptor (Gnrhr) from Mus musculus (Mouse).